The chain runs to 65 residues: UPF0434 protein BH12860 (65 aa).

This sequence belongs to the UPF0434 family.

This Bartonella henselae (strain ATCC 49882 / DSM 28221 / CCUG 30454 / Houston 1) (Rochalimaea henselae) protein is UPF0434 protein BH12860.